The following is a 549-amino-acid chain: Polynucleotide 5'-hydroxyl-kinase nol-9 (549 aa).

190 to 197 (GHKGAGKS) is an ATP binding site.

This sequence belongs to the Clp1 family. NOL9/GRC3 subfamily.

It is found in the nucleus. It localises to the nucleolus. Polynucleotide 5'-kinase involved in rRNA processing. This chain is Polynucleotide 5'-hydroxyl-kinase nol-9 (nol-9), found in Caenorhabditis elegans.